A 156-amino-acid polypeptide reads, in one-letter code: Cytochrome c-type biogenesis protein CcmE 2 (156 aa).

The Cytoplasmic portion of the chain corresponds to 1 to 8 (MNPQRRRR). The chain crosses the membrane as a helical; Signal-anchor for type II membrane protein span at residues 9–29 (LWLVLALVLAGGLATTLVAMA). At 30 to 156 (LQRNVAYLYT…AAAGQVGERQ (127 aa)) the chain is on the periplasmic side. The heme site is built by histidine 123 and tyrosine 127. A disordered region spans residues 136-156 (MGSAHRKHDVPAAAGQVGERQ).

It belongs to the CcmE/CycJ family.

The protein resides in the cell inner membrane. In terms of biological role, heme chaperone required for the biogenesis of c-type cytochromes. Transiently binds heme delivered by CcmC and transfers the heme to apo-cytochromes in a process facilitated by CcmF and CcmH. This chain is Cytochrome c-type biogenesis protein CcmE 2, found in Xanthomonas axonopodis pv. citri (strain 306).